We begin with the raw amino-acid sequence, 840 residues long: MMERTYGRRKPGMLNDDVSRAEHIFPSSSSPELEPVDFSTQESSCVWNYSSRSTFSDNDFSEKRNKRPRNGGGGFGSNSTLMEAQEFGELIENEDEVNFALDGLKKGHKVRIRRAALSSLLSICESQYQRRSLRALGISQSIIDAILGLCLDDIPSNLAAATLFFVLTTDGQDDHFMESPNSIKFLVKLLRPVVSASTKVKPRNIGSRLLSIIKDVDAARDAASMHDLSSCDIIDRAQEILVNCKELRLIDSYKIERMRPELSTKWVALLVMEKACLSKISFDDTSGTVKKSGGMFKEKLRELGGLDAVFDVVMDCHTVMESWVTHDTLSVEDIKDDLNKQSLMLLLKCLKIMENATFLSTENQIHLLRLNKSMGSHESRLSFTELMISVIKILSGLQLRAHRNEKHPHPQPHLASAVKKGFVTIISSDTCSTTGFSSIKSLSVSKRNQSAFLVGCSTTPKPGSQSSVMSTIDHCTLTTTAGSNTGSFAGRLASLGSGISRSKTRTSQTRESSCKKVENFASFEDSQDPFSFDLEDSGPSRWAVGKQKKSKGQKRKGSYRDKKDERSLQLFSSQEESNHGLNSQEESSDRDHHVTEQPSLTYDIDKGCLCLLSDCLLTAVKVLMNLTNGNSVGCREVAACGGLESMAELVVGHFPSFTRSPLYSQMESGTCHQKDKHLTDQELDFLVAILGLLVNLVEKNGINRSRLAAASVPITNPEGLQDSEQDMIPLLCSIFLTNKGSADTKDETSTFTLDDEEAVLESEKEAEKMIVEAYSALLLAFLSTESRSIRNAIRDYLPKRDMAILVPVLDRFVAFHTTLDMIPPETHKVVMEVIESCKLP.

Disordered stretches follow at residues 1–37 (MMER…EPVD), 56–78 (SDND…FGSN), and 532–594 (FDLE…DHHV). Over residues 546-557 (KQKKSKGQKRKG) the composition is skewed to basic residues. Residues 558–567 (SYRDKKDERS) are compositionally biased toward basic and acidic residues. Polar residues predominate over residues 569 to 585 (QLFSSQEESNHGLNSQE). The 56-residue stretch at 764–819 (KEAEKMIVEAYSALLLAFLSTESRSIRNAIRDYLPKRDMAILVPVLDRFVAFHTTL) folds into the WAPL domain.

This sequence belongs to the WAPL family. Interacts with the cohesin complex throughout the cell cycle. Expressed in roots, leaves, buds and siliques.

It is found in the nucleus. Its subcellular location is the chromosome. Functionally, regulator of sister chromatid cohesion in meiosis which negatively regulates cohesin association with chromatin, acting as an antagonist of CTF7. Cohesion ensures that chromosome partitioning is accurate in both meiotic and mitotic cells and plays an important role in DNA repair. Essential for the prophase removal of cohesin during meiosis thus determining the timely release of meiotic cohesion. Important for proper spindle attachment and assembly during meiosis. Helps to prevent abnormal centromere association during prophase I in meiocytes. Required for early embryonic patterning. Also involved in chromosome segregation during mitosis. This chain is Wings apart-like protein 2, found in Arabidopsis thaliana (Mouse-ear cress).